A 511-amino-acid chain; its full sequence is 2,3-bisphosphoglycerate-independent phosphoglycerate mutase (511 aa).

D12 serves as a coordination point for Mn(2+). At Y36 the chain carries Phosphotyrosine. Residue S62 coordinates Mn(2+). Catalysis depends on S62, which acts as the Phosphoserine intermediate. Residues H123, 153 to 154, R185, R191, 261 to 264, and K336 each bind substrate; these read RD and RPDR. Mn(2+) is bound by residues D403, H407, D444, H445, and H462.

It belongs to the BPG-independent phosphoglycerate mutase family. In terms of assembly, monomer. Mn(2+) serves as cofactor.

The enzyme catalyses (2R)-2-phosphoglycerate = (2R)-3-phosphoglycerate. Its pathway is carbohydrate degradation; glycolysis; pyruvate from D-glyceraldehyde 3-phosphate: step 3/5. Its function is as follows. Essential for rapid growth and for sporulation. Catalyzes the interconversion of 2-phosphoglycerate and 3-phosphoglycerate. The protein is 2,3-bisphosphoglycerate-independent phosphoglycerate mutase of Bacillus licheniformis (strain ATCC 14580 / DSM 13 / JCM 2505 / CCUG 7422 / NBRC 12200 / NCIMB 9375 / NCTC 10341 / NRRL NRS-1264 / Gibson 46).